The sequence spans 356 residues: Chavicol O-methyltransferase (356 aa).

Gly-202, Asp-225, Asp-245, Met-246, and Lys-259 together coordinate S-adenosyl-L-methionine. The active-site Proton acceptor is His-263.

It belongs to the class I-like SAM-binding methyltransferase superfamily. Cation-independent O-methyltransferase family. COMT subfamily. As to quaternary structure, homodimer. As to expression, specifically expressed in the peltate glandular trichomes on the surface of the young basil leaves.

The enzyme catalyses (E)-isoeugenol + S-adenosyl-L-methionine = (E)-isomethyleugenol + S-adenosyl-L-homocysteine + H(+). It participates in aromatic compound metabolism; phenylpropanoid biosynthesis. Phenylpropene O-methyltransferase that catalyzes the methylation of the para-4-hydroxyl of chavicol to methylchavicol. Can also convert eugenol to methyleugenol but with less affinity. The protein is Chavicol O-methyltransferase (CVOMT1) of Ocimum basilicum (Sweet basil).